The sequence spans 201 residues: Protease (201 aa).

Residues histidine 53, aspartate 70, and cysteine 121 contribute to the active site.

It belongs to the peptidase C5 family. As to quaternary structure, interacts with protease cofactor pVI-C; this interaction is necessary for protease activation.

It is found in the virion. It localises to the host nucleus. It carries out the reaction Cleaves proteins of the adenovirus and its host cell at two consensus sites: -Yaa-Xaa-Gly-Gly-|-Xaa- and -Yaa-Xaa-Gly-Xaa-|-Gly- (in which Yaa is Met, Ile or Leu, and Xaa is any amino acid).. Its activity is regulated as follows. Requires DNA and protease cofactor for maximal activation. Inside nascent virions, becomes partially activated by binding to the viral DNA, allowing it to cleave the cofactor that binds to the protease and fully activates it. Actin, like the viral protease cofactor, seems to act as a cofactor in the cleavage of cytokeratin 18 and of actin itself. Functionally, cleaves viral precursor proteins (pTP, pIIIa, pVI, pVII, pVIII, and pX) inside newly assembled particles giving rise to mature virions. Protease complexed to its cofactor slides along the viral DNA to specifically locate and cleave the viral precursors. Mature virions have a weakened organization compared to the unmature virions, thereby facilitating subsequent uncoating. Without maturation, the particle lacks infectivity and is unable to uncoat. Late in adenovirus infection, in the cytoplasm, may participate in the cytoskeleton destruction. Cleaves host cell cytoskeletal keratins K7 and K18. The sequence is that of Protease from Equine adenovirus B serotype 2 (EAdV-2).